The sequence spans 258 residues: Imidazole glycerol phosphate synthase subunit HisF (258 aa).

Active-site residues include Asp-11 and Asp-130.

The protein belongs to the HisA/HisF family. As to quaternary structure, heterodimer of HisH and HisF.

It localises to the cytoplasm. The catalysed reaction is 5-[(5-phospho-1-deoxy-D-ribulos-1-ylimino)methylamino]-1-(5-phospho-beta-D-ribosyl)imidazole-4-carboxamide + L-glutamine = D-erythro-1-(imidazol-4-yl)glycerol 3-phosphate + 5-amino-1-(5-phospho-beta-D-ribosyl)imidazole-4-carboxamide + L-glutamate + H(+). The protein operates within amino-acid biosynthesis; L-histidine biosynthesis; L-histidine from 5-phospho-alpha-D-ribose 1-diphosphate: step 5/9. Functionally, IGPS catalyzes the conversion of PRFAR and glutamine to IGP, AICAR and glutamate. The HisF subunit catalyzes the cyclization activity that produces IGP and AICAR from PRFAR using the ammonia provided by the HisH subunit. The sequence is that of Imidazole glycerol phosphate synthase subunit HisF from Xanthomonas oryzae pv. oryzae (strain MAFF 311018).